Consider the following 394-residue polypeptide: Multidrug resistance protein D (394 aa).

The Cytoplasmic segment spans residues 1–8 (MKRQRNVN). Residues 9–29 (LLLMLVLLVAVGQMAQTIYIP) form a helical membrane-spanning segment. Residues 30–46 (AIADMARDLNVREGAVQ) are Periplasmic-facing. A helical membrane pass occupies residues 47-67 (SVMGAYLLTYGVSQLFYGPIS). Topologically, residues 68-73 (DRVGRR) are cytoplasmic. The chain crosses the membrane as a helical span at residues 74–94 (PVILVGMSIFMLATLVAVTTS). A topological domain (periplasmic) is located at residue Ser95. Residues 96–116 (LTVLIAASAMQGMGTGVGGVM) form a helical membrane-spanning segment. The Cytoplasmic portion of the chain corresponds to 117–134 (ARTLPRDLYERTQLRHAN). Residues 135 to 155 (SLLNMGILVSPLLAPLIGGLL) traverse the membrane as a helical segment. The Periplasmic segment spans residues 156 to 162 (DTMWNWR). A helical transmembrane segment spans residues 163 to 183 (ACYLFLLVLCAGVTFSMARWM). Residues 184-212 (PETRPVDAPRTRLLTSYKTLFGNSGFNCY) lie on the Cytoplasmic side of the membrane. A helical membrane pass occupies residues 213 to 233 (LLMLIGGLAGIAAFEACSGVL). Residues 234 to 242 (MGAVLGLSS) lie on the Periplasmic side of the membrane. A helical membrane pass occupies residues 243-263 (MTVSILFILPIPAAFFGAWFA). At 264–276 (GRPNKRFSTLMWQ) the chain is on the cytoplasmic side. Residues 277-297 (SVICCLLAGLLMWIPDWFGVM) traverse the membrane as a helical segment. Asn298 is a topological domain (periplasmic). Residues 299 to 319 (VWTLLVPAALFFFGAGMLFPL) traverse the membrane as a helical segment. Residues 320 to 329 (ATSGAMEPFP) are Cytoplasmic-facing. The chain crosses the membrane as a helical span at residues 330–350 (FLAGTAGALVGGLQNIGSGVL). Residues 351 to 364 (ASLSAMLPQTGQGS) are Periplasmic-facing. Residues 365 to 385 (LGLLMTLMGLLIVLCWLPLAT) form a helical membrane-spanning segment. The Cytoplasmic segment spans residues 386–394 (RMSHQGQPV).

This sequence belongs to the major facilitator superfamily.

The protein resides in the cell inner membrane. Its function is as follows. Multidrug resistance pump that participates in a low energy shock adaptive response. The sequence is that of Multidrug resistance protein D (emrD) from Escherichia coli (strain K12).